A 227-amino-acid chain; its full sequence is 2-C-methyl-D-erythritol 4-phosphate cytidylyltransferase (227 aa).

It belongs to the IspD/TarI cytidylyltransferase family. IspD subfamily.

The enzyme catalyses 2-C-methyl-D-erythritol 4-phosphate + CTP + H(+) = 4-CDP-2-C-methyl-D-erythritol + diphosphate. Its pathway is isoprenoid biosynthesis; isopentenyl diphosphate biosynthesis via DXP pathway; isopentenyl diphosphate from 1-deoxy-D-xylulose 5-phosphate: step 2/6. Functionally, catalyzes the formation of 4-diphosphocytidyl-2-C-methyl-D-erythritol from CTP and 2-C-methyl-D-erythritol 4-phosphate (MEP). This chain is 2-C-methyl-D-erythritol 4-phosphate cytidylyltransferase, found in Mycobacterium marinum (strain ATCC BAA-535 / M).